Consider the following 395-residue polypeptide: 8-amino-7-oxononanoate synthase (395 aa).

Position 108 to 109 (108 to 109 (GF)) interacts with pyridoxal 5'-phosphate. Histidine 134 lines the substrate pocket. Residues serine 184, 209–212 (DDAH), and 240–243 (TLSK) contribute to the pyridoxal 5'-phosphate site. Lysine 243 carries the N6-(pyridoxal phosphate)lysine modification. Threonine 357 contributes to the substrate binding site.

Belongs to the class-II pyridoxal-phosphate-dependent aminotransferase family. BioF subfamily. In terms of assembly, homodimer. The cofactor is pyridoxal 5'-phosphate.

The catalysed reaction is 6-carboxyhexanoyl-[ACP] + L-alanine + H(+) = (8S)-8-amino-7-oxononanoate + holo-[ACP] + CO2. It participates in cofactor biosynthesis; biotin biosynthesis. Functionally, catalyzes the decarboxylative condensation of pimeloyl-[acyl-carrier protein] and L-alanine to produce 8-amino-7-oxononanoate (AON), [acyl-carrier protein], and carbon dioxide. The sequence is that of 8-amino-7-oxononanoate synthase from Fervidobacterium nodosum (strain ATCC 35602 / DSM 5306 / Rt17-B1).